We begin with the raw amino-acid sequence, 200 residues long: Riboflavin kinase (200 aa).

Positions 1–20 (MATARPSIVGPDSGPESPFP) are disordered. T42 and N44 together coordinate Mg(2+). E110 serves as the catalytic Nucleophile.

Belongs to the flavokinase family. The cofactor is Zn(2+). Requires Mg(2+) as cofactor.

The catalysed reaction is riboflavin + ATP = FMN + ADP + H(+). Its pathway is cofactor biosynthesis; FMN biosynthesis; FMN from riboflavin (ATP route): step 1/1. Catalyzes the phosphorylation of riboflavin (vitamin B2) to form flavin mononucleotide (FMN) coenzyme. The sequence is that of Riboflavin kinase (FMN1) from Pyricularia oryzae (strain 70-15 / ATCC MYA-4617 / FGSC 8958) (Rice blast fungus).